The primary structure comprises 352 residues: C-C chemokine receptor type 5 (352 aa).

Topologically, residues 1-30 (MDYQVSSPTYDIDYYTSEPCQKINVKQIAA) are extracellular. The residue at position 3 (Tyr3) is a Sulfotyrosine. Ser6 and Ser7 each carry an O-linked (GalNAc...) serine glycan. A sulfotyrosine mark is found at Tyr10, Tyr14, and Tyr15. 2 disulfide bridges follow: Cys20–Cys269 and Cys101–Cys178. The helical transmembrane segment at 31-58 (RLLPPLYSLVFIFGFVGNILVVLILINC) threads the bilayer. Residues 59-68 (KRLKSMTDIY) are Cytoplasmic-facing. A helical membrane pass occupies residues 69 to 89 (LLNLAISDLLFLLTVPFWAHY). Residues 90–102 (AAAQWDFGNTMCQ) lie on the Extracellular side of the membrane. The chain crosses the membrane as a helical span at residues 103–124 (LLTGLYFIGFFSGIFFIILLTI). The Cytoplasmic segment spans residues 125 to 141 (DRYLAIVHAVFALKART). A helical membrane pass occupies residues 142–166 (VTFGVVTSVITWVVAVFASLPRIIF). Topologically, residues 167 to 198 (TTSHRERLHYTCSSHFPYSQYQFWKNFHTLKI) are extracellular. Residues 199–218 (VILGLVLPLLVMVICYSGIL) traverse the membrane as a helical segment. At 219–235 (KTLLRCRNEKKRHRAVR) the chain is on the cytoplasmic side. The helical transmembrane segment at 236–260 (LIFTIMIVYFLFWAPYNIVLLLNTF) threads the bilayer. Topologically, residues 261–277 (QEFFGLNNCSSSNRLDQ) are extracellular. The chain crosses the membrane as a helical span at residues 278 to 301 (AMQVTETLGMTHCCINPIIYAFVG). Residues 302 to 352 (EKFRNYLLVFFQKHIAKRFCKCCSIFQQEAPERASSVYTRSTGEQEISVGL) are Cytoplasmic-facing. S-palmitoyl cysteine attachment occurs at residues Cys321, Cys323, and Cys324. 4 positions are modified to phosphoserine; by BARK1: Ser336, Ser337, Ser342, and Ser349.

Belongs to the G-protein coupled receptor 1 family. Interacts with PRAF2. Efficient ligand binding to CCL3/MIP-1alpha and CCL4/MIP-1beta requires sulfation, O-glycosylation and sialic acid modifications. Glycosylation on Ser-6 is required for efficient binding of CCL4. Interacts with GRK2. Interacts with ARRB1 and ARRB2. Interacts with CNIH4. Interacts with S100A4; this interaction stimulates T-lymphocyte chemotaxis. Post-translationally, sulfated on at least 2 of the N-terminal tyrosines. Sulfation is required for efficient binding of the chemokines, CCL3 and CCL4. In terms of processing, palmitoylation in the C-terminal is important for cell surface expression. Phosphorylation on serine residues in the C-terminal is stimulated by binding CC chemokines especially by APO-RANTES. Post-translationally, O-glycosylated, but not N-glycosylated. Ser-6 appears to be the major site even if Ser-7 may be also O-glycosylated. Also sialylated glycans present which contribute to chemokine binding. Thr-16 and Ser-17 may also be glycosylated and, if so, with small moieties such as a T-antigen.

The protein resides in the cell membrane. Functionally, receptor for a number of inflammatory CC-chemokines including CCL3/MIP-1-alpha, CCL4/MIP-1-beta and RANTES and subsequently transduces a signal by increasing the intracellular calcium ion level. May play a role in the control of granulocytic lineage proliferation or differentiation. Participates in T-lymphocyte migration to the infection site by acting as a chemotactic receptor. The protein is C-C chemokine receptor type 5 (CCR5) of Cercopithecus ascanius (Black-cheeked white-nosed monkey).